A 127-amino-acid polypeptide reads, in one-letter code: Gamma-synuclein (127 aa).

2 consecutive repeat copies span residues 20-30 and 31-41. The segment at 20-67 is 4 X 11 AA tandem repeats of [EGSA]-K-T-K-[EQ]-[GQ]-V-X(4); sequence EKTKQGVTEAAEKTKEGVMYVGTKTKENVVHSVTSVAEKTKEQANAVS. Residues 42–56 form a 3; approximate repeat; it reads TKTKENVVHSVTSVA. Repeat unit 4 spans residues 57–67; that stretch reads EKTKEQANAVS. Phosphoserine occurs at positions 67 and 72. Residues 97–127 are disordered; that stretch reads KEDLKPSAPQQEGEAAKEKEEVAEEAQSGGD. Serine 124 is modified (phosphoserine; by BARK1, CaMK2 and CK2).

It belongs to the synuclein family. May be a centrosome-associated protein. Interacts with MYOC; affects its secretion and its aggregation. Post-translationally, phosphorylated. Phosphorylation by GRK5 appears to occur on residues distinct from the residue phosphorylated by other kinases.

The protein localises to the cytoplasm. The protein resides in the perinuclear region. It is found in the cytoskeleton. It localises to the microtubule organizing center. Its subcellular location is the centrosome. The protein localises to the spindle. Its function is as follows. Plays a role in neurofilament network integrity. May be involved in modulating axonal architecture during development and in the adult. In vitro, increases the susceptibility of neurofilament-H to calcium-dependent proteases. May also function in modulating the keratin network in skin. Activates the MAPK and Elk-1 signal transduction pathway. The chain is Gamma-synuclein (SNCG) from Macaca fascicularis (Crab-eating macaque).